Here is a 447-residue protein sequence, read N- to C-terminus: Phosphoglucosamine mutase (447 aa).

The Phosphoserine intermediate role is filled by serine 102. Residues serine 102, aspartate 241, aspartate 243, and aspartate 245 each contribute to the Mg(2+) site. Serine 102 is subject to Phosphoserine.

It belongs to the phosphohexose mutase family. Mg(2+) is required as a cofactor. Activated by phosphorylation.

The enzyme catalyses alpha-D-glucosamine 1-phosphate = D-glucosamine 6-phosphate. Its function is as follows. Catalyzes the conversion of glucosamine-6-phosphate to glucosamine-1-phosphate. This is Phosphoglucosamine mutase from Pseudoalteromonas atlantica (strain T6c / ATCC BAA-1087).